Here is a 389-residue protein sequence, read N- to C-terminus: MNNIVHKLKTLVLNEAFGGVLLIVCTLLALLVQNGSFSEHYREFLNLKVGFSVGEFELNKPFLLWINDGLISIFFFAIGLELKKEFLHGDFKNPKNIVLPFMAALGGILIPAMLFALVNIGDAYTLKGWAIPTATDTAFALAILMMCGKHIPSSLKIFLLSLAIFDDVGAILIIAIFYTTKLSIAAFVIAGLAILVMLILNLLGITRKSFYFICSVILWISVLKSGVHATLAGIVTAFFIPMQTKNGEAFLEEIYESLKFWIAFIILPLFAFANAGVNLSNIDIGAIFSGVSIGIFLGLFVGKQVGVFLFSYLAIRFKFAALPQGSNLKQLYGVCILTGIGFTMSLFIDGLAYEVSDIFNYADNLAILIASFCSGIWGFIYLKFFTTRS.

11 consecutive transmembrane segments (helical) span residues 12–32, 62–82, 97–117, 128–148, 157–177, 184–204, 220–240, 260–280, 282–302, 331–351, and 365–385; these read VLNE…ALLV, FLLW…GLEL, IVLP…LFAL, GWAI…MMCG, IFLL…IAIF, IAAF…NLLG, ISVL…AFFI, FWIA…VNLS, IDIG…LFVG, LYGV…IDGL, and LAIL…LKFF.

The protein belongs to the NhaA Na(+)/H(+) (TC 2.A.33) antiporter family.

The protein resides in the cell inner membrane. It carries out the reaction Na(+)(in) + 2 H(+)(out) = Na(+)(out) + 2 H(+)(in). In terms of biological role, na(+)/H(+) antiporter that extrudes sodium in exchange for external protons. This Campylobacter jejuni subsp. jejuni serotype O:2 (strain ATCC 700819 / NCTC 11168) protein is Na(+)/H(+) antiporter NhaA 1.